The primary structure comprises 86 residues: Weak toxin 2 (86 aa).

The first 23 residues, 1-23, serve as a signal peptide directing secretion; that stretch reads MKTLLLTLVVVAIVCLDLGYTLT. Cystine bridges form between Cys24–Cys45, Cys27–Cys32, Cys38–Cys63, Cys67–Cys78, and Cys79–Cys84.

The protein belongs to the three-finger toxin family. Ancestral subfamily. Orphan group II sub-subfamily. Expressed by the venom gland.

The protein localises to the secreted. In terms of biological role, binds with low affinity to muscular (alpha-1-beta-1-delta-epsilon/CHRNA1-CHRNB1-CHRND-CHRNE) and very low affinity to neuronal (alpha-7/CHRNA7) nicotinic acetylcholine receptor (nAChR). This chain is Weak toxin 2, found in Bungarus candidus (Malayan krait).